The chain runs to 399 residues: MADGIDRRNDDRLEFSTSKEVTVAPTFEDMHLKESLLRGIYAYGYESPSAVQSRAIVQICKGRDTIAQAQSGTGKTATFSISILQVIDTAVRETQALVLSPTRELATQIQSVIMALGDYMNVQCHACIGGTNIGEDIRKLDYGQHVVSGTPGRVADMIRRRHLRTRHIKMLVLDEADELLNRGFREQIYDVYRYLPPATQVVVVSATLPYDVLDMTTKFMTDPVRVLVKRDELTLEGIKQYFIAVEKEEWKFDTLCDLYDTLTITQAVIFCNTRRKVDWLTDKMREANFTVSSMHGEMPQKERDSIMQDFRQGNSRVLISTDVWARGIDVQQVSLVINYDLPTNRENYIHRIGRSGRFGRKGVAINFVTSDDVRILRDIELYYSTQIDEMPMNVADLLS.

The Q motif signature appears at 25–53 (PTFEDMHLKESLLRGIYAYGYESPSAVQS). Residues 56 to 226 (IVQICKGRDT…TKFMTDPVRV (171 aa)) enclose the Helicase ATP-binding domain. 69 to 76 (AQSGTGKT) provides a ligand contact to ATP. Positions 174–177 (DEAD) match the DEAD box motif. A Helicase C-terminal domain is found at 237-398 (GIKQYFIAVE…EMPMNVADLL (162 aa)).

This sequence belongs to the DEAD box helicase family. DDX48/FAL1 subfamily.

It is found in the nucleus. The protein localises to the nucleolus. The catalysed reaction is ATP + H2O = ADP + phosphate + H(+). Functionally, ATP-dependent RNA helicase involved in 40S ribosomal subunit biogenesis. Required for the processing and cleavage of 35S pre-rRNA at sites A0, A1, and A2, leading to mature 18S rRNA. This chain is ATP-dependent RNA helicase fal1 (fal1), found in Aspergillus clavatus (strain ATCC 1007 / CBS 513.65 / DSM 816 / NCTC 3887 / NRRL 1 / QM 1276 / 107).